Consider the following 472-residue polypeptide: Probable serine/threonine-protein kinase At1g01540 (472 aa).

The helical transmembrane segment at 24 to 44 (LWVVIGILLGSLIVIALFLLS) threads the bilayer. 2 positions are modified to phosphothreonine: Thr67 and Thr143. The Protein kinase domain maps to 154 to 431 (LCEENVIGEG…IHMLEAEDLL (278 aa)). Residues 160 to 168 (IGEGGYGIV) and Lys182 contribute to the ATP site. The residue at position 227 (Tyr227) is a Phosphotyrosine. Asp280 functions as the Proton acceptor in the catalytic mechanism. Ser284 carries the post-translational modification Phosphoserine. 2 positions are modified to phosphothreonine: Thr314 and Thr319. Tyr327 is modified (phosphotyrosine). Positions 437 to 449 (RTTRDHGSRERQE) are enriched in basic and acidic residues. A disordered region spans residues 437–472 (RTTRDHGSRERQETAVVAAGSESGESGSRHHQQKQR). Residues 451–462 (AVVAAGSESGES) are compositionally biased toward low complexity.

This sequence belongs to the protein kinase superfamily. Ser/Thr protein kinase family.

Its subcellular location is the membrane. It carries out the reaction L-seryl-[protein] + ATP = O-phospho-L-seryl-[protein] + ADP + H(+). The catalysed reaction is L-threonyl-[protein] + ATP = O-phospho-L-threonyl-[protein] + ADP + H(+). In Arabidopsis thaliana (Mouse-ear cress), this protein is Probable serine/threonine-protein kinase At1g01540.